The sequence spans 597 residues: Arginine--tRNA ligase (597 aa).

The 'HIGH' region motif lies at Pro125–His135.

It belongs to the class-I aminoacyl-tRNA synthetase family. As to quaternary structure, monomer.

Its subcellular location is the cytoplasm. The enzyme catalyses tRNA(Arg) + L-arginine + ATP = L-arginyl-tRNA(Arg) + AMP + diphosphate. The chain is Arginine--tRNA ligase from Porphyromonas gingivalis (strain ATCC 33277 / DSM 20709 / CIP 103683 / JCM 12257 / NCTC 11834 / 2561).